Reading from the N-terminus, the 228-residue chain is L-ribulose-5-phosphate 4-epimerase UlaF (228 aa).

Substrate-binding positions include 26–27 (GN), 43–44 (SG), and 72–73 (SS). Residues D74, H93, and H95 each contribute to the Zn(2+) site. Catalysis depends on D118, which acts as the Proton donor/acceptor. A Zn(2+)-binding site is contributed by H167. Y225 functions as the Proton donor/acceptor in the catalytic mechanism.

Belongs to the aldolase class II family. AraD/FucA subfamily. The cofactor is Zn(2+).

It carries out the reaction L-ribulose 5-phosphate = D-xylulose 5-phosphate. It functions in the pathway cofactor degradation; L-ascorbate degradation; D-xylulose 5-phosphate from L-ascorbate: step 4/4. Catalyzes the isomerization of L-ribulose 5-phosphate to D-xylulose 5-phosphate. Is involved in the anaerobic L-ascorbate utilization. The sequence is that of L-ribulose-5-phosphate 4-epimerase UlaF from Escherichia coli O45:K1 (strain S88 / ExPEC).